A 257-amino-acid polypeptide reads, in one-letter code: MGFLEEVRSYKESQIDTSPEYLRKLEELIEERKEFYDFEKALTSCGTKIIAEVKKASPSEGNIKEVNPEEQAKLYEKAGAIAISVLTDEKYFKGSLEDLRNVRESVKLPLLRKDFTVHKVQILEAKAYGADIVLLIVRMLSDKELKELLDFSEELGLSPLVEVFTLDEAKRALDAGAKIIGINNRDLETFKVDINKTKELAPKIKDLGAKFVISESGISKREEILELMNYQVDGFLIGTSLMKSENPYRKLKELLGF.

It belongs to the TrpC family.

It catalyses the reaction 1-(2-carboxyphenylamino)-1-deoxy-D-ribulose 5-phosphate + H(+) = (1S,2R)-1-C-(indol-3-yl)glycerol 3-phosphate + CO2 + H2O. Its pathway is amino-acid biosynthesis; L-tryptophan biosynthesis; L-tryptophan from chorismate: step 4/5. The polypeptide is Indole-3-glycerol phosphate synthase (trpC) (Aquifex aeolicus (strain VF5)).